We begin with the raw amino-acid sequence, 437 residues long: Ribosomal protein uS12 methylthiotransferase RimO (437 aa).

Residues 4 to 114 (PRVSFVSLGC…VMAAVHEAAP (111 aa)) enclose the MTTase N-terminal domain. Positions 13, 49, 78, 145, 149, and 152 each coordinate [4Fe-4S] cluster. The Radical SAM core domain maps to 131-369 (LTPRHYAYLK…MQRQQKISAT (239 aa)). Residues 372–437 (AKKVGKRLPV…DAYDLYGSAV (66 aa)) form the TRAM domain.

Belongs to the methylthiotransferase family. RimO subfamily. The cofactor is [4Fe-4S] cluster.

It localises to the cytoplasm. It catalyses the reaction L-aspartate(89)-[ribosomal protein uS12]-hydrogen + (sulfur carrier)-SH + AH2 + 2 S-adenosyl-L-methionine = 3-methylsulfanyl-L-aspartate(89)-[ribosomal protein uS12]-hydrogen + (sulfur carrier)-H + 5'-deoxyadenosine + L-methionine + A + S-adenosyl-L-homocysteine + 2 H(+). Functionally, catalyzes the methylthiolation of an aspartic acid residue of ribosomal protein uS12. The chain is Ribosomal protein uS12 methylthiotransferase RimO from Mesorhizobium japonicum (strain LMG 29417 / CECT 9101 / MAFF 303099) (Mesorhizobium loti (strain MAFF 303099)).